Reading from the N-terminus, the 522-residue chain is Exo-alpha-(1-&gt;6)-L-arabinofuranosidase (522 aa).

Alpha-L-arabinofuranose is bound by residues Glu-39, Asn-84, and Asn-185. Catalysis depends on Glu-186, which acts as the Proton donor/acceptor. Alpha-L-arabinofuranose contacts are provided by Tyr-257, Glu-310, and Gln-370. Glu-310 functions as the Nucleophile in the catalytic mechanism.

Belongs to the glycosyl hydrolase 51 family. Homohexamer; trimer of dimers.

The catalysed reaction is Hydrolysis of terminal non-reducing alpha-L-arabinofuranoside residues in alpha-L-arabinosides.. The enzyme catalyses (20S)-ginsenoside Rc + H2O = L-arabinofuranose + (20S)-ginsenoside Rd. With respect to regulation, completely inhibited by Cu(2+) and partially inhibited by Co(2+) and Ba(2+). In terms of biological role, catalyzes the hydrolysis of p-nitrophenyl-alpha-L-arabinofuranoside (pNP-alphaL-Af) and the hydrolysis of the terminal alpha-L-arabinofuranoside at the C20 position of ginsenoside Rc to produce ginsenoside Rd. Cannot hydrolyze p-nitrophenyl-alpha-L-arabinopyranoside (pNP-alphaL-Ap) and ginsenoside Rb2. In Bifidobacterium longum, this protein is Exo-alpha-(1-&gt;6)-L-arabinofuranosidase.